The primary structure comprises 391 residues: Methylthioribose-1-phosphate isomerase (391 aa).

Asp-267 acts as the Proton donor in catalysis.

This sequence belongs to the eIF-2B alpha/beta/delta subunits family. MtnA subfamily.

Its subcellular location is the cytoplasm. The protein resides in the nucleus. It carries out the reaction 5-(methylsulfanyl)-alpha-D-ribose 1-phosphate = 5-(methylsulfanyl)-D-ribulose 1-phosphate. The protein operates within amino-acid biosynthesis; L-methionine biosynthesis via salvage pathway; L-methionine from S-methyl-5-thio-alpha-D-ribose 1-phosphate: step 1/6. Catalyzes the interconversion of methylthioribose-1-phosphate (MTR-1-P) into methylthioribulose-1-phosphate (MTRu-1-P). The sequence is that of Methylthioribose-1-phosphate isomerase from Ajellomyces capsulatus (strain NAm1 / WU24) (Darling's disease fungus).